We begin with the raw amino-acid sequence, 137 residues long: UPF0768 protein C1952.04c (137 aa).

A compositionally biased stretch (basic and acidic residues) spans 79–93 (QRRRREDLPTPERPE). The segment at 79–137 (QRRRREDLPTPERPEASAQQHAFFPGSSSQQTDIPNVRPQPHIPPPRKSDEAPPPYSYK) is disordered. A compositionally biased stretch (pro residues) spans 119–137 (PHIPPPRKSDEAPPPYSYK).

It belongs to the UPF0768 family.

This chain is UPF0768 protein C1952.04c, found in Schizosaccharomyces pombe (strain 972 / ATCC 24843) (Fission yeast).